The primary structure comprises 444 residues: Serine--tRNA ligase (444 aa).

Residue 249-251 (TAE) participates in L-serine binding. Residues 280-282 (RRE) and V296 each bind ATP. L-serine is bound at residue E303. 367–370 (EIVS) contributes to the ATP binding site. Position 401 (T401) interacts with L-serine.

This sequence belongs to the class-II aminoacyl-tRNA synthetase family. Type-1 seryl-tRNA synthetase subfamily. As to quaternary structure, homodimer. The tRNA molecule binds across the dimer.

The protein localises to the cytoplasm. The catalysed reaction is tRNA(Ser) + L-serine + ATP = L-seryl-tRNA(Ser) + AMP + diphosphate + H(+). It carries out the reaction tRNA(Sec) + L-serine + ATP = L-seryl-tRNA(Sec) + AMP + diphosphate + H(+). It functions in the pathway aminoacyl-tRNA biosynthesis; selenocysteinyl-tRNA(Sec) biosynthesis; L-seryl-tRNA(Sec) from L-serine and tRNA(Sec): step 1/1. Functionally, catalyzes the attachment of serine to tRNA(Ser). Is also able to aminoacylate tRNA(Sec) with serine, to form the misacylated tRNA L-seryl-tRNA(Sec), which will be further converted into selenocysteinyl-tRNA(Sec). This chain is Serine--tRNA ligase, found in Picrophilus torridus (strain ATCC 700027 / DSM 9790 / JCM 10055 / NBRC 100828 / KAW 2/3).